The primary structure comprises 925 residues: Ubp5-interacting protein ftp105 (925 aa).

Residues 650-664 (EGSSDFESKSSDNTS) are compositionally biased toward low complexity. Residues 650–671 (EGSSDFESKSSDNTSLDGTPLQ) form a disordered region.

Belongs to the hid-1 family. As to quaternary structure, interacts with ubp5.

It is found in the cytoplasm. The protein localises to the golgi apparatus. Functionally, required for the localization of ubp5 to the Golgi apparatus. Involved in detoxification of cadmium ion. In Schizosaccharomyces pombe (strain 972 / ATCC 24843) (Fission yeast), this protein is Ubp5-interacting protein ftp105 (ftp105).